The primary structure comprises 458 residues: Ribosomal protein uS12 methylthiotransferase RimO (458 aa).

One can recognise an MTTase N-terminal domain in the interval 6–116 (PKVGFVSLGC…VMEAVHAALP (111 aa)). [4Fe-4S] cluster-binding residues include Cys-15, Cys-51, Cys-80, Cys-147, Cys-151, and Cys-154. The 239-residue stretch at 133–371 (LTPRHYAYLK…AKQAQISALR (239 aa)) folds into the Radical SAM core domain. In terms of domain architecture, TRAM spans 373-441 (ESKIGSVQQC…EHDLFGDALP (69 aa)).

The protein belongs to the methylthiotransferase family. RimO subfamily. Requires [4Fe-4S] cluster as cofactor.

The protein localises to the cytoplasm. It catalyses the reaction L-aspartate(89)-[ribosomal protein uS12]-hydrogen + (sulfur carrier)-SH + AH2 + 2 S-adenosyl-L-methionine = 3-methylsulfanyl-L-aspartate(89)-[ribosomal protein uS12]-hydrogen + (sulfur carrier)-H + 5'-deoxyadenosine + L-methionine + A + S-adenosyl-L-homocysteine + 2 H(+). Functionally, catalyzes the methylthiolation of an aspartic acid residue of ribosomal protein uS12. In Xanthomonas euvesicatoria pv. vesicatoria (strain 85-10) (Xanthomonas campestris pv. vesicatoria), this protein is Ribosomal protein uS12 methylthiotransferase RimO.